The following is a 314-amino-acid chain: MQFGIVAAIADGGRTARAGGSVRPPRRPPASHTAWGLPRGRPTGQPHATPTKSGPTSIAYVEVNNDQLANVGRYQLANGANAFDVAIIFAANINWNGSKAVLYNNENVQATLDDAATQIRPLQAKGIKVSLSILGNHQGAGIANFPTQAAAEDFAAQVSATVSKYGLDGVDLDDEYSDYGTNGTPQPNQQSIGWLISALRADVPGKLISFYDIGPASSALSSSSSTIGSKLDYAWNPYYGTYSAPSIPGLDKSRLSAAAVDVQNTPQSTAVSLAQRTKADGYGVFMTYNLPDGDVSPYVSSMTKVLYGQAATYH.

The first 47 residues, 1–47, serve as a signal peptide directing secretion; it reads MQFGIVAAIADGGRTARAGGSVRPPRRPPASHTAWGLPRGRPTGQPH. Residues 14–54 form a disordered region; sequence RTARAGGSVRPPRRPPASHTAWGLPRGRPTGQPHATPTKSG. Residues 55-309 enclose the GH18 domain; that stretch reads PTSIAYVEVN…SSMTKVLYGQ (255 aa). E175 (proton donor) is an active-site residue.

It belongs to the glycosyl hydrolase 18 family. In terms of assembly, monomer.

It localises to the secreted. The catalysed reaction is an N(4)-(oligosaccharide-(1-&gt;3)-[oligosaccharide-(1-&gt;6)]-beta-D-Man-(1-&gt;4)-beta-D-GlcNAc-(1-&gt;4)-alpha-D-GlcNAc)-L-asparaginyl-[protein] + H2O = an oligosaccharide-(1-&gt;3)-[oligosaccharide-(1-&gt;6)]-beta-D-Man-(1-&gt;4)-D-GlcNAc + N(4)-(N-acetyl-beta-D-glucosaminyl)-L-asparaginyl-[protein]. Functionally, cleaves asparagine-linked oligomannose and hybrid, but not complex, oligosaccharides from glycoproteins. The chain is Endo-beta-N-acetylglucosaminidase from Flavobacterium sp. (strain SK1022).